A 702-amino-acid chain; its full sequence is WVIPLLPLPVIMSMGFGLFFIPTATKNLRRIWAFPSVLFLSIAIVYSVHLSIQQINGSSIYQYLWSWTVNNDFSLEFGYLIDPLTSIMLILITTVGILVLIYSDGYMSHDEGYLRFFVYISFFTTSMLGLVTSSNLIQIYFFWELVGMCSYLLIGFWFTRPIAASACQKAFVTNRVGDFGLLLGILGFFWITGSLEFRDLFKIANNWIPNNGINSLLTTLCAFLLFLGAVAKSAQFPLHVWLPDAMEGPTPISALIHAATMVAAGIFLLARLFPLFISIPLIMTLISLVGTITLFLGATLALAQRDIKRSLAYSTMSQLGYMMLALGIGSYQAALFHLITHAYSKALLFLGSGSVIHSMEPLVGYSPDKSQNMVLMGGLRKYIPITRTTFLWGTLSLCGIPPLACFWSKDEILSNSWLYSPFFGIIASFTAGLTAFYMFRIYLLSFDGYLRVHFQNYSTTKEGSLYSISLWGKKISKGVNRDFVLSRTKNGVSFFSQNRPQIQGNTRNRIGCFSTSFGAKNNFSYPHETGNTMLFPLLILLFFTLFIGFIGISFDNGAMDNGIAELTLLSKWLTPSINLTQESSNSFINSYEFITNAISSVSLAIIGLFIAYILYGSAYSFFQNLNFINSFYKESPKKYFFDQVKKKIYSWSYNRGYIDIFYTRVFTLGIRGLTELTEFFDKGIIDGITNGVGLVSFCIGEG.

15 helical membrane-spanning segments follow: residues 1 to 21 (WVIPLLPLPVIMSMGFGLFFI), 31 to 51 (IWAFPSVLFLSIAIVYSVHLS), 81 to 101 (IDPLTSIMLILITTVGILVLI), 117 to 137 (FVYISFFTTSMLGLVTSSNLI), 139 to 159 (IYFFWELVGMCSYLLIGFWFT), 177 to 197 (GDFGLLLGILGFFWITGSLEF), 211 to 231 (NGINSLLTTLCAFLLFLGAVA), 250 to 270 (TPISALIHAATMVAAGIFLLA), 272 to 292 (LFPLFISIPLIMTLISLVGTI), 319 to 339 (LGYMMLALGIGSYQAALFHLI), 346 to 366 (ALLFLGSGSVIHSMEPLVGYS), 388 to 408 (TTFLWGTLSLCGIPPLACFWS), 417 to 437 (WLYSPFFGIIASFTAGLTAFY), 534 to 554 (LFPLLILLFFTLFIGFIGISF), and 602 to 622 (SLAIIGLFIAYILYGSAYSFF).

The protein belongs to the complex I subunit 5 family. In terms of assembly, NDH is composed of at least 16 different subunits, 5 of which are encoded in the nucleus.

It is found in the plastid. It localises to the chloroplast thylakoid membrane. It catalyses the reaction a plastoquinone + NADH + (n+1) H(+)(in) = a plastoquinol + NAD(+) + n H(+)(out). The enzyme catalyses a plastoquinone + NADPH + (n+1) H(+)(in) = a plastoquinol + NADP(+) + n H(+)(out). Functionally, NDH shuttles electrons from NAD(P)H:plastoquinone, via FMN and iron-sulfur (Fe-S) centers, to quinones in the photosynthetic chain and possibly in a chloroplast respiratory chain. The immediate electron acceptor for the enzyme in this species is believed to be plastoquinone. Couples the redox reaction to proton translocation, and thus conserves the redox energy in a proton gradient. In Poa pratensis (Kentucky bluegrass), this protein is NAD(P)H-quinone oxidoreductase subunit 5, chloroplastic (ndhF).